The chain runs to 96 residues: Co-chaperonin GroES (96 aa).

It belongs to the GroES chaperonin family. Heptamer of 7 subunits arranged in a ring. Interacts with the chaperonin GroEL.

Its subcellular location is the cytoplasm. Functionally, together with the chaperonin GroEL, plays an essential role in assisting protein folding. The GroEL-GroES system forms a nano-cage that allows encapsulation of the non-native substrate proteins and provides a physical environment optimized to promote and accelerate protein folding. GroES binds to the apical surface of the GroEL ring, thereby capping the opening of the GroEL channel. The sequence is that of Co-chaperonin GroES from Nitrosomonas eutropha (strain DSM 101675 / C91 / Nm57).